The sequence spans 239 residues: Probable plastid-lipid-associated protein 8, chloroplastic (239 aa).

The transit peptide at 1 to 52 (MAATASSLTIASSFSEPRTQIHSSRRLNLPLQYSIPYKVLRSRSRRLGLVVS) directs the protein to the chloroplast. Serine 53 carries the N-acetylserine modification.

The protein belongs to the PAP/fibrillin family.

Its subcellular location is the plastid. It localises to the chloroplast. This is Probable plastid-lipid-associated protein 8, chloroplastic (PAP8) from Arabidopsis thaliana (Mouse-ear cress).